Consider the following 217-residue polypeptide: Cytidylate kinase (217 aa).

10–18 contributes to the ATP binding site; it reads GPAGAGKST.

Belongs to the cytidylate kinase family. Type 1 subfamily.

The protein localises to the cytoplasm. The catalysed reaction is CMP + ATP = CDP + ADP. It catalyses the reaction dCMP + ATP = dCDP + ADP. In Clostridium botulinum (strain Okra / Type B1), this protein is Cytidylate kinase.